Here is a 400-residue protein sequence, read N- to C-terminus: Probable glucan endo-1,6-beta-glucosidase B (400 aa).

Positions 1 to 17 (MIRRLAALSALSGLATA) are cleaved as a signal peptide. N-linked (GlcNAc...) asparagine glycosylation occurs at Asn-30. Glu-219 (proton donor) is an active-site residue. Asn-272 carries an N-linked (GlcNAc...) asparagine glycan. Glu-320 functions as the Nucleophile in the catalytic mechanism.

This sequence belongs to the glycosyl hydrolase 5 (cellulase A) family.

It localises to the secreted. It catalyses the reaction Random hydrolysis of (1-&gt;6)-linkages in (1-&gt;6)-beta-D-glucans.. Beta-glucanases participate in the metabolism of beta-glucan, the main structural component of the cell wall. Acts on lutean, pustulan and 1,6-oligo-beta-D-glucosides. This Neosartorya fischeri (strain ATCC 1020 / DSM 3700 / CBS 544.65 / FGSC A1164 / JCM 1740 / NRRL 181 / WB 181) (Aspergillus fischerianus) protein is Probable glucan endo-1,6-beta-glucosidase B (exgB).